A 60-amino-acid polypeptide reads, in one-letter code: Protein YoaG (60 aa).

Homodimer.

This chain is Protein YoaG (yoaG), found in Escherichia coli O157:H7.